The following is a 70-amino-acid chain: Protein SlyX homolog (70 aa).

A disordered region spans residues arginine 51–tyrosine 70.

The protein belongs to the SlyX family.

In Nitrobacter hamburgensis (strain DSM 10229 / NCIMB 13809 / X14), this protein is Protein SlyX homolog.